The sequence spans 219 residues: uncharacterized protein (219 aa).

The region spanning 4–79 (GLRIIAENKI…YIIEIEEEES (76 aa)) is the ACT domain.

This is an uncharacterized protein from Archaeoglobus fulgidus (strain ATCC 49558 / DSM 4304 / JCM 9628 / NBRC 100126 / VC-16).